The sequence spans 547 residues: MFS-type transporter ungB (547 aa).

Transmembrane regions (helical) follow at residues 14–34, 50–70, 80–100, 111–131, 138–158, 169–189, 210–230, 238–258, 279–299, 316–336, 343–363, 366–386, 392–412, and 475–495; these read LLVTISLCLTLFCVSLDETVL, DVGWYGSSYLFVFTATQMAWG, WVFLTGVTVFEVGSLVCGVSP, IAGLGAGSINAGAVLIISNTI, IYLGCLGVVHGVVSVLGPVIG, WCFFLNLPIGAITVLGIVFCL, LLGSAFFIPGILMLLLALEWG, SWRVILLFVLSAVALAVFAVV, LGLIGYIVGNSGGLFVFVYYL, LAILPTQLGMVAASLAGGILV, TPFLIVSSLLAVAGAGLLSSL, ASGLGSILGYQVVLSVGIGLG, VVPSVVCAPGDVVMAIATLCF, and AVSETFYVGVAMCALSLLGSA. The segment at 503–547 is disordered; that stretch reads PGHKEATEKVEGEGQGQGQQQEQDQGQGWGEVGESHALAHPTADK. Positions 504-514 are enriched in basic and acidic residues; sequence GHKEATEKVEG.

It belongs to the major facilitator superfamily. TCR/Tet family.

It localises to the membrane. MFS-type transporter; part of the gene cluster that mediates the biosynthesis of the unguisins, gamma-aminobutyric acid (GABA)-containing fungal cyclic heptapeptides with the amino acid sequence cyclo-(D-Ala1-D-Val2-L-Phe3-D-Val4-D-Ala5-D-Trp6-GABA7) for unguisin A and cyclo-(D-Ala1-D-Val2-L-Leu3-D-Val4-D-Ala5-D-Trp6-GABA7) for unguisin B. May be involved in the secretion of unguisins. The sequence is that of MFS-type transporter ungB from Aspergillus violaceofuscus (strain CBS 115571).